Here is a 1088-residue protein sequence, read N- to C-terminus: RNA-directed RNA polymerase (1088 aa).

The RdRp catalytic domain occupies 501–687 (LSYGDVTRFL…AKRYIAGGKI (187 aa)).

Belongs to the reoviridae RNA-directed RNA polymerase family. In terms of assembly, interacts with VP3 (Potential). Interacts with VP2; this interaction activates VP1. Interacts with NSP5; this interaction is probably necessary for the formation of functional virus factories. Interacts with NSP2; this interaction is weak. It depends on Mg(2+) as a cofactor.

The protein resides in the virion. The enzyme catalyses RNA(n) + a ribonucleoside 5'-triphosphate = RNA(n+1) + diphosphate. In terms of biological role, RNA-directed RNA polymerase that is involved in both transcription and genome replication. Together with VP3 capping enzyme, forms an enzyme complex positioned near the channels situated at each of the five-fold vertices of the core. Following infection, the outermost layer of the virus is lost, leaving a double-layered particle (DLP) made up of the core and VP6 shell. VP1 then catalyzes the transcription of fully conservative plus-strand genomic RNAs that are extruded through the DLP's channels into the cytoplasm where they function as mRNAs for translation of viral proteins. One copy of each of the viral (+)RNAs is also recruited during core assembly, together with newly synthesized polymerase complexes and VP2. The polymerase of these novo-formed particles catalyzes the synthesis of complementary minus-strands leading to dsRNA formation. To do so, the polymerase specifically recognizes and binds 4 bases 5'-UGUG-3' in the conserved 3'-sequence of plus-strand RNA templates. VP2 presumably activates the autoinhibited VP1-RNA complex to coordinate packaging and genome replication. Once dsRNA synthesis is complete, the polymerase switches to the transcriptional mode, thus providing secondary transcription. The chain is RNA-directed RNA polymerase from Homo sapiens (Human).